The sequence spans 45 residues: Large ribosomal subunit protein bL34 (45 aa).

A compositionally biased stretch (polar residues) spans 1–10 (MTQRTLGGTN). The tract at residues 1–45 (MTQRTLGGTNRKQKRTSGFRARMRKSNGRKVIQARRKKGRHRLSV) is disordered. Basic residues predominate over residues 11 to 45 (RKQKRTSGFRARMRKSNGRKVIQARRKKGRHRLSV).

This sequence belongs to the bacterial ribosomal protein bL34 family.

The protein is Large ribosomal subunit protein bL34 of Crocosphaera subtropica (strain ATCC 51142 / BH68) (Cyanothece sp. (strain ATCC 51142)).